Consider the following 747-residue polypeptide: Cyclic di-GMP phosphodiesterase PdeF (747 aa).

Residues 1–14 (MKLNATYIKIRDKW) are Periplasmic-facing. The chain crosses the membrane as a helical span at residues 15-36 (WGLPLFLPSLILPIFAHINTFA). Topologically, residues 37 to 42 (HISSGE) are cytoplasmic. Residues 43–65 (VFLFYLPLALMISMMMFFSWAAL) traverse the membrane as a helical segment. The Periplasmic portion of the chain corresponds to 66-79 (PGIALGIFVRKYAE). A helical membrane pass occupies residues 80–102 (LGFYETLSLTANFIIIIILCWGG). Topologically, residues 103 to 128 (YRVFTPRRNNVSHGDTRLISQRIFWQ) are cytoplasmic. Residues 129-151 (IVFPATLFLILFQFAAFVGLLAS) form a helical membrane-spanning segment. The Periplasmic segment spans residues 152–165 (RENLVGVMPFNLGT). The chain crosses the membrane as a helical span at residues 166 to 188 (LINYQALLVGNLIGVPLCYFIIR). At 189–215 (VVRNPFYLRSYYSQLKQQVDAKVTKKE) the chain is on the cytoplasmic side. The chain crosses the membrane as a helical span at residues 216–235 (FALWLLALGALLLLLCMPLN). At 236–239 (EKST) the chain is on the periplasmic side. Residues 240-259 (IFSTNYTLSLLLPLMMWGAM) traverse the membrane as a helical segment. Residues 260–265 (RYGYKL) are Cytoplasmic-facing. Residues 266-285 (ISLLWAVVLMISIHSYQNYI) traverse the membrane as a helical segment. Residues 286-294 (PIYPGYTTQ) are Periplasmic-facing. Residues 295–317 (LTITSSSYLVFSFIVNYMAVLAT) traverse the membrane as a helical segment. Topologically, residues 318 to 747 (RQRAVVRRIQ…NEIEPIRESA (430 aa)) are cytoplasmic. The 252-residue stretch at 493–744 (KVAMMNRLQQ…DTLNEIEPIR (252 aa)) folds into the EAL domain.

It depends on Mg(2+) as a cofactor. Mn(2+) is required as a cofactor.

Its subcellular location is the cell inner membrane. It catalyses the reaction 3',3'-c-di-GMP + H2O = 5'-phosphoguanylyl(3'-&gt;5')guanosine + H(+). Its activity is regulated as follows. Inhibited by pGpG. Its function is as follows. Phosphodiesterase (PDE) that catalyzes the hydrolysis of cyclic-di-GMP (c-di-GMP) to 5'-pGpG. Truncated proteins consisting of the GGDEF/EAL domains (residues 319-747) or of the EAL domain alone (481-747) have c-di-GMP phosphodiesterase activity. They do not have diguanylate cyclase activity. Cyclic-di-GMP is a second messenger which controls cell surface-associated traits in bacteria. This is Cyclic di-GMP phosphodiesterase PdeF from Escherichia coli (strain K12).